The primary structure comprises 301 residues: tRNA dimethylallyltransferase (301 aa).

8 to 15 (GPTAVGKT) provides a ligand contact to ATP. 10-15 (TAVGKT) is a binding site for substrate. The tract at residues 33–36 (DSRQ) is interaction with substrate tRNA.

Belongs to the IPP transferase family. As to quaternary structure, monomer. Mg(2+) serves as cofactor.

The catalysed reaction is adenosine(37) in tRNA + dimethylallyl diphosphate = N(6)-dimethylallyladenosine(37) in tRNA + diphosphate. Functionally, catalyzes the transfer of a dimethylallyl group onto the adenine at position 37 in tRNAs that read codons beginning with uridine, leading to the formation of N6-(dimethylallyl)adenosine (i(6)A). This Thermosipho africanus (strain TCF52B) protein is tRNA dimethylallyltransferase.